Here is a 199-residue protein sequence, read N- to C-terminus: dITP/XTP pyrophosphatase (199 aa).

Residue 8–13 (SGNAGK) participates in substrate binding. Asp-69 acts as the Proton acceptor in catalysis. Asp-69 is a binding site for Mg(2+). Substrate-binding positions include Ser-70, 154–157 (FGYN), Lys-177, and 182–183 (HR).

This sequence belongs to the HAM1 NTPase family. As to quaternary structure, homodimer. Mg(2+) is required as a cofactor.

The enzyme catalyses XTP + H2O = XMP + diphosphate + H(+). It catalyses the reaction dITP + H2O = dIMP + diphosphate + H(+). The catalysed reaction is ITP + H2O = IMP + diphosphate + H(+). Pyrophosphatase that catalyzes the hydrolysis of nucleoside triphosphates to their monophosphate derivatives, with a high preference for the non-canonical purine nucleotides XTP (xanthosine triphosphate), dITP (deoxyinosine triphosphate) and ITP. Seems to function as a house-cleaning enzyme that removes non-canonical purine nucleotides from the nucleotide pool, thus preventing their incorporation into DNA/RNA and avoiding chromosomal lesions. This chain is dITP/XTP pyrophosphatase, found in Xanthomonas axonopodis pv. citri (strain 306).